A 199-amino-acid polypeptide reads, in one-letter code: Thymidylate kinase (199 aa).

Position 7 to 14 (Gly7 to Ser14) interacts with ATP.

Belongs to the thymidylate kinase family.

The catalysed reaction is dTMP + ATP = dTDP + ADP. Phosphorylation of dTMP to form dTDP in both de novo and salvage pathways of dTTP synthesis. This Neorickettsia sennetsu (strain ATCC VR-367 / Miyayama) (Ehrlichia sennetsu) protein is Thymidylate kinase.